A 105-amino-acid chain; its full sequence is UPF0060 membrane protein Rmet_4032 (105 aa).

4 helical membrane passes run 4 to 24 (VGLY…PYLW), 28 to 48 (GASP…AWLL), 60 to 80 (AAYG…VDGV), and 82 to 102 (PSPW…IIVF).

This sequence belongs to the UPF0060 family.

The protein localises to the cell inner membrane. This chain is UPF0060 membrane protein Rmet_4032, found in Cupriavidus metallidurans (strain ATCC 43123 / DSM 2839 / NBRC 102507 / CH34) (Ralstonia metallidurans).